A 160-amino-acid polypeptide reads, in one-letter code: Transcription elongation factor GreA (160 aa).

Residues 50–70 (AAREQQSFNEGRIQELEAKLS) adopt a coiled-coil conformation.

The protein belongs to the GreA/GreB family.

Necessary for efficient RNA polymerase transcription elongation past template-encoded arresting sites. The arresting sites in DNA have the property of trapping a certain fraction of elongating RNA polymerases that pass through, resulting in locked ternary complexes. Cleavage of the nascent transcript by cleavage factors such as GreA or GreB allows the resumption of elongation from the new 3'terminus. GreA releases sequences of 2 to 3 nucleotides. The polypeptide is Transcription elongation factor GreA (Legionella pneumophila (strain Corby)).